The following is a 636-amino-acid chain: tRNA 5-methylaminomethyl-2-thiouridine biosynthesis bifunctional protein MnmC (636 aa).

The tRNA (mnm(5)s(2)U34)-methyltransferase stretch occupies residues 1–202 (MTVSKILKQV…ERAALRAQSH (202 aa)). The tract at residues 227-636 (IGGGVASACL…GKALEMSGKS (410 aa)) is FAD-dependent cmnm(5)s(2)U34 oxidoreductase.

In the N-terminal section; belongs to the methyltransferase superfamily. tRNA (mnm(5)s(2)U34)-methyltransferase family. It in the C-terminal section; belongs to the DAO family. It depends on FAD as a cofactor.

It localises to the cytoplasm. It carries out the reaction 5-aminomethyl-2-thiouridine(34) in tRNA + S-adenosyl-L-methionine = 5-methylaminomethyl-2-thiouridine(34) in tRNA + S-adenosyl-L-homocysteine + H(+). Its function is as follows. Catalyzes the last two steps in the biosynthesis of 5-methylaminomethyl-2-thiouridine (mnm(5)s(2)U) at the wobble position (U34) in tRNA. Catalyzes the FAD-dependent demodification of cmnm(5)s(2)U34 to nm(5)s(2)U34, followed by the transfer of a methyl group from S-adenosyl-L-methionine to nm(5)s(2)U34, to form mnm(5)s(2)U34. The polypeptide is tRNA 5-methylaminomethyl-2-thiouridine biosynthesis bifunctional protein MnmC (Shewanella halifaxensis (strain HAW-EB4)).